The primary structure comprises 71 residues: DNA-directed RNA polymerase subunit Rpo10 (71 aa).

Residues C6, C9, C52, and C53 each contribute to the Zn(2+) site.

The protein belongs to the archaeal Rpo10/eukaryotic RPB10 RNA polymerase subunit family. In terms of assembly, part of the RNA polymerase complex. Zn(2+) is required as a cofactor.

It is found in the cytoplasm. The enzyme catalyses RNA(n) + a ribonucleoside 5'-triphosphate = RNA(n+1) + diphosphate. Its function is as follows. DNA-dependent RNA polymerase (RNAP) catalyzes the transcription of DNA into RNA using the four ribonucleoside triphosphates as substrates. This chain is DNA-directed RNA polymerase subunit Rpo10, found in Methanocella arvoryzae (strain DSM 22066 / NBRC 105507 / MRE50).